A 228-amino-acid chain; its full sequence is Isoprenyl transferase (228 aa).

Aspartate 15 is a catalytic residue. Aspartate 15 is a binding site for Mg(2+). Substrate contacts are provided by residues 16–19 (GNGR), tryptophan 20, arginine 28, histidine 32, and 60–62 (STE). Residue asparagine 63 is the Proton acceptor of the active site. Substrate is bound by residues tryptophan 64, arginine 66, arginine 176, and 182–184 (RLS). A Mg(2+)-binding site is contributed by glutamate 195.

It belongs to the UPP synthase family. Homodimer. Requires Mg(2+) as cofactor.

Functionally, catalyzes the condensation of isopentenyl diphosphate (IPP) with allylic pyrophosphates generating different type of terpenoids. In Wolinella succinogenes (strain ATCC 29543 / DSM 1740 / CCUG 13145 / JCM 31913 / LMG 7466 / NCTC 11488 / FDC 602W) (Vibrio succinogenes), this protein is Isoprenyl transferase.